The chain runs to 32 residues: Dermaseptin-DA4 (32 aa).

In terms of tissue distribution, expressed by the skin glands.

Its subcellular location is the secreted. It localises to the target cell membrane. Antimicrobial peptide with activity against Gram-negative bacteria, but not against Gram-positive bacteria. Active against E.coli (MIC=5 uM), and P.aeruginosa (MIC=40 uM). Acts by disrupting cell membranes. Is able to depolarize membranes of Gram-positive and Gram-negative bacteria. Also acts as a potent chemoattractant for human leukocytes and activates them mainly through a GPCR, possibly FPRL1 coupled to the ERK1/2 MAPK pathway. Is unstructured in water but become helical upon binding to anionic lipids. In contrast to most dermaseptins, is not structured in the presence of zwitterionic lipids. Does not show hemolytic activity. The protein is Dermaseptin-DA4 of Agalychnis dacnicolor (Giant Mexican leaf frog).